The sequence spans 261 residues: MLTKTRAVVLKEVKFREQSKICSLYTRDFGRISVILKGGRNLKSRLSGLFCTGSLLEVVLYNRSNRDLQLVSEARIIRSPMTAEPSMERFSAIYRLIEILKISTGNEEKNIRLFNALERTLEKLCAPCRNADAAVAWFMLKLISESGFEPSIEQCVTTGKSILPMLQEGSADDLCLTYDPGGVSLPVPAAQKGPPGQRLPVQVYLLMRTLNRLDIRSIDEIDIPADNSRLLCDILQNYCSLHNNYNPSSKNRRIISRILYE.

The protein belongs to the RecO family.

In terms of biological role, involved in DNA repair and RecF pathway recombination. The polypeptide is DNA repair protein RecO (Chlorobium phaeobacteroides (strain BS1)).